The following is a 379-amino-acid chain: Chaperone protein DnaJ (379 aa).

The region spanning 5 to 69 (DYYEVLGISK…NKRATIDQFG (65 aa)) is the J domain. The CR-type zinc finger occupies 136–218 (GTTKEISIRK…CHGKGTENKT (83 aa)). Residues C149, C152, C166, C169, C192, C195, C206, and C209 each contribute to the Zn(2+) site. CXXCXGXG motif repeat units follow at residues 149–156 (CETCHGDG), 166–173 (CSYCNGAG), 192–199 (CPKCNGSG), and 206–213 (CPTCHGKG).

The protein belongs to the DnaJ family. In terms of assembly, homodimer. Zn(2+) is required as a cofactor.

It is found in the cytoplasm. Functionally, participates actively in the response to hyperosmotic and heat shock by preventing the aggregation of stress-denatured proteins and by disaggregating proteins, also in an autonomous, DnaK-independent fashion. Unfolded proteins bind initially to DnaJ; upon interaction with the DnaJ-bound protein, DnaK hydrolyzes its bound ATP, resulting in the formation of a stable complex. GrpE releases ADP from DnaK; ATP binding to DnaK triggers the release of the substrate protein, thus completing the reaction cycle. Several rounds of ATP-dependent interactions between DnaJ, DnaK and GrpE are required for fully efficient folding. Also involved, together with DnaK and GrpE, in the DNA replication of plasmids through activation of initiation proteins. This chain is Chaperone protein DnaJ, found in Staphylococcus aureus.